The following is a 449-amino-acid chain: Phosphoglucosamine mutase (449 aa).

The active-site Phosphoserine intermediate is the Ser101. Mg(2+) is bound by residues Ser101, Asp242, Asp244, and Asp246. Phosphoserine is present on Ser101.

The protein belongs to the phosphohexose mutase family. Requires Mg(2+) as cofactor. In terms of processing, activated by phosphorylation.

The enzyme catalyses alpha-D-glucosamine 1-phosphate = D-glucosamine 6-phosphate. Catalyzes the conversion of glucosamine-6-phosphate to glucosamine-1-phosphate. This Bradyrhizobium sp. (strain ORS 278) protein is Phosphoglucosamine mutase.